The sequence spans 221 residues: Large ribosomal subunit protein uL16x (221 aa).

Belongs to the universal ribosomal protein uL16 family. As to quaternary structure, component of the small ribosomal subunit. Mature ribosomes consist of a small (40S) and a large (60S) subunit. The 40S subunit contains about 33 different proteins and 1 molecule of RNA (18S). The 60S subunit contains about 49 different proteins and 3 molecules of RNA (25S, 5.8S and 5S).

This Arabidopsis thaliana (Mouse-ear cress) protein is Large ribosomal subunit protein uL16x (RPL10C).